A 158-amino-acid chain; its full sequence is Ribonuclease H (158 aa).

Residues 1-147 (MKVTIYTDGA…CDVLATTAAD (147 aa)) enclose the RNase H type-1 domain. D8, E52, D74, and D139 together coordinate Mg(2+).

The protein belongs to the RNase H family. Monomer. Mg(2+) serves as cofactor.

The protein localises to the cytoplasm. It carries out the reaction Endonucleolytic cleavage to 5'-phosphomonoester.. Endonuclease that specifically degrades the RNA of RNA-DNA hybrids. This Lachnoclostridium phytofermentans (strain ATCC 700394 / DSM 18823 / ISDg) (Clostridium phytofermentans) protein is Ribonuclease H.